We begin with the raw amino-acid sequence, 321 residues long: Lipoyl synthase (321 aa).

7 residues coordinate [4Fe-4S] cluster: C68, C73, C79, C94, C98, C101, and S308. Residues 80-297 form the Radical SAM core domain; it reads FNHGTATFMI…KEQALAMGFT (218 aa).

This sequence belongs to the radical SAM superfamily. Lipoyl synthase family. [4Fe-4S] cluster serves as cofactor.

Its subcellular location is the cytoplasm. The catalysed reaction is [[Fe-S] cluster scaffold protein carrying a second [4Fe-4S](2+) cluster] + N(6)-octanoyl-L-lysyl-[protein] + 2 oxidized [2Fe-2S]-[ferredoxin] + 2 S-adenosyl-L-methionine + 4 H(+) = [[Fe-S] cluster scaffold protein] + N(6)-[(R)-dihydrolipoyl]-L-lysyl-[protein] + 4 Fe(3+) + 2 hydrogen sulfide + 2 5'-deoxyadenosine + 2 L-methionine + 2 reduced [2Fe-2S]-[ferredoxin]. It functions in the pathway protein modification; protein lipoylation via endogenous pathway; protein N(6)-(lipoyl)lysine from octanoyl-[acyl-carrier-protein]: step 2/2. Its function is as follows. Catalyzes the radical-mediated insertion of two sulfur atoms into the C-6 and C-8 positions of the octanoyl moiety bound to the lipoyl domains of lipoate-dependent enzymes, thereby converting the octanoylated domains into lipoylated derivatives. The chain is Lipoyl synthase from Proteus mirabilis (strain HI4320).